A 184-amino-acid chain; its full sequence is ATP synthase subunit b, chloroplastic (184 aa).

Residues 27–49 traverse the membrane as a helical segment; the sequence is LATNPINLSVVLGVLIFFGKGVL.

The protein belongs to the ATPase B chain family. As to quaternary structure, F-type ATPases have 2 components, F(1) - the catalytic core - and F(0) - the membrane proton channel. F(1) has five subunits: alpha(3), beta(3), gamma(1), delta(1), epsilon(1). F(0) has four main subunits: a(1), b(1), b'(1) and c(10-14). The alpha and beta chains form an alternating ring which encloses part of the gamma chain. F(1) is attached to F(0) by a central stalk formed by the gamma and epsilon chains, while a peripheral stalk is formed by the delta, b and b' chains.

The protein resides in the plastid. It localises to the chloroplast thylakoid membrane. In terms of biological role, f(1)F(0) ATP synthase produces ATP from ADP in the presence of a proton or sodium gradient. F-type ATPases consist of two structural domains, F(1) containing the extramembraneous catalytic core and F(0) containing the membrane proton channel, linked together by a central stalk and a peripheral stalk. During catalysis, ATP synthesis in the catalytic domain of F(1) is coupled via a rotary mechanism of the central stalk subunits to proton translocation. Its function is as follows. Component of the F(0) channel, it forms part of the peripheral stalk, linking F(1) to F(0). This is ATP synthase subunit b, chloroplastic from Pelargonium hortorum (Common geranium).